The chain runs to 149 residues: Small ribosomal subunit protein uS19 (149 aa).

Belongs to the universal ribosomal protein uS19 family.

In terms of biological role, protein S19 forms a complex with S13 that binds strongly to the 16S ribosomal RNA. The chain is Small ribosomal subunit protein uS19 from Methanopyrus kandleri (strain AV19 / DSM 6324 / JCM 9639 / NBRC 100938).